The primary structure comprises 261 residues: Cytochrome c oxidase subunit 3 (261 aa).

Over 1–15 (MTHQTHAYHMVDPSP) the chain is Mitochondrial matrix. A helical transmembrane segment spans residues 16–34 (WPLTGALSALLMTSGLTMW). At 35-40 (FHYHSV) the chain is on the mitochondrial intermembrane side. Residues 41 to 66 (VLLFLGLMTNTLTMFQWWRDVVREGT) traverse the membrane as a helical segment. Residues 67 to 72 (FQGHHT) lie on the Mitochondrial matrix side of the membrane. Residues 73–105 (PVVQEGLRYGMILFITSEVLFFTGFFWAFYHSS) form a helical membrane-spanning segment. Residues 106–128 (LAPTPELGSYWPPVGVYPLNPLE) lie on the Mitochondrial intermembrane side of the membrane. The helical transmembrane segment at 129 to 152 (VPLLNTSVLLASGVTITWAHHSLM) threads the bilayer. Residues 153-155 (EGN) are Mitochondrial matrix-facing. A helical transmembrane segment spans residues 156 to 183 (RKNMLQALLITILLGVYFTLLQMFEYYE). At 184-190 (ASFTISD) the chain is on the mitochondrial intermembrane side. The helical transmembrane segment at 191–223 (GIYGSTFFVTTGFHGLHVIIGSTFLLTCFIRQL) threads the bilayer. The Mitochondrial matrix portion of the chain corresponds to 224–232 (KFHFTSNHH). A helical transmembrane segment spans residues 233 to 256 (FGFEAAAWYWHFVDVVWLFLYLSI). The Mitochondrial intermembrane segment spans residues 257 to 261 (YWWGS).

Belongs to the cytochrome c oxidase subunit 3 family. Component of the cytochrome c oxidase (complex IV, CIV), a multisubunit enzyme composed of 14 subunits. The complex is composed of a catalytic core of 3 subunits MT-CO1, MT-CO2 and MT-CO3, encoded in the mitochondrial DNA, and 11 supernumerary subunits COX4I, COX5A, COX5B, COX6A, COX6B, COX6C, COX7A, COX7B, COX7C, COX8 and NDUFA4, which are encoded in the nuclear genome. The complex exists as a monomer or a dimer and forms supercomplexes (SCs) in the inner mitochondrial membrane with NADH-ubiquinone oxidoreductase (complex I, CI) and ubiquinol-cytochrome c oxidoreductase (cytochrome b-c1 complex, complex III, CIII), resulting in different assemblies (supercomplex SCI(1)III(2)IV(1) and megacomplex MCI(2)III(2)IV(2)).

Its subcellular location is the mitochondrion inner membrane. The catalysed reaction is 4 Fe(II)-[cytochrome c] + O2 + 8 H(+)(in) = 4 Fe(III)-[cytochrome c] + 2 H2O + 4 H(+)(out). In terms of biological role, component of the cytochrome c oxidase, the last enzyme in the mitochondrial electron transport chain which drives oxidative phosphorylation. The respiratory chain contains 3 multisubunit complexes succinate dehydrogenase (complex II, CII), ubiquinol-cytochrome c oxidoreductase (cytochrome b-c1 complex, complex III, CIII) and cytochrome c oxidase (complex IV, CIV), that cooperate to transfer electrons derived from NADH and succinate to molecular oxygen, creating an electrochemical gradient over the inner membrane that drives transmembrane transport and the ATP synthase. Cytochrome c oxidase is the component of the respiratory chain that catalyzes the reduction of oxygen to water. Electrons originating from reduced cytochrome c in the intermembrane space (IMS) are transferred via the dinuclear copper A center (CU(A)) of subunit 2 and heme A of subunit 1 to the active site in subunit 1, a binuclear center (BNC) formed by heme A3 and copper B (CU(B)). The BNC reduces molecular oxygen to 2 water molecules using 4 electrons from cytochrome c in the IMS and 4 protons from the mitochondrial matrix. The sequence is that of Cytochrome c oxidase subunit 3 (MT-CO3) from Mammuthus primigenius (Siberian woolly mammoth).